A 457-amino-acid polypeptide reads, in one-letter code: UDP-glycosyltransferase 708C2 (457 aa).

The Proton acceptor role is filled by His-32. Residue His-32 participates in an anthocyanidin binding. Asp-129 serves as the catalytic Charge relay. Residue Thr-150 participates in UDP-alpha-D-glucose binding. The segment at 279 to 280 (NR) is UDP. UDP-alpha-D-glucose-binding residues include Val-341, Gln-343, His-358, Trp-361, Asn-362, Ser-363, and Glu-366. Position 381 (Gly-381) interacts with an anthocyanidin. Positions 382 and 383 each coordinate UDP-alpha-D-glucose.

The protein belongs to the UDP-glycosyltransferase family. In terms of tissue distribution, expressed in cotyledons. Not detected in flowers, leaves, roots and hypocotyls.

It carries out the reaction a 3'-hydro-2'-hydroxy-beta-oxodihydrochalcone + UDP-alpha-D-glucose = a 3'-(beta-D-glucopyranosyl)-2'-hydroxy-beta-oxodihydrochalcone + UDP + H(+). UDP-glucose-dependent glucosyltransferase catalyzing the c-glucosylation of 2-hydroxyflavanones (2-hydroxynaringenin, 2-hydroxyeriodictyol and 2-hydroxypinocembrin) and phloretin. No activity with flavanones, flavones or flavonols. The sequence is that of UDP-glycosyltransferase 708C2 from Fagopyrum esculentum (Common buckwheat).